A 69-amino-acid chain; its full sequence is DNA gyrase inhibitor YacG (69 aa).

Zn(2+)-binding residues include Cys-7, Cys-10, Cys-26, and Cys-30.

Belongs to the DNA gyrase inhibitor YacG family. In terms of assembly, interacts with GyrB. Requires Zn(2+) as cofactor.

Its function is as follows. Inhibits all the catalytic activities of DNA gyrase by preventing its interaction with DNA. Acts by binding directly to the C-terminal domain of GyrB, which probably disrupts DNA binding by the gyrase. The sequence is that of DNA gyrase inhibitor YacG from Shewanella baltica (strain OS155 / ATCC BAA-1091).